Reading from the N-terminus, the 152-residue chain is MANSERTFIAIKPDGVQRGLMGEIIKRFEQKGFRLVAMKFMRASEDLLKEHYIDLKDRPFFAGLVKYMHSGPVVAMVWEGLNVVKTGRVMLGETNPADSKPGTIRGDFCIQVGRNIIHGSDSVESAEKEIALWFRPEELVNYKSCAQNWIYE.

Residues lysine 12, phenylalanine 60, arginine 88, threonine 94, arginine 105, and asparagine 115 each coordinate ATP. The active-site Pros-phosphohistidine intermediate is the histidine 118.

Belongs to the NDK family. As to quaternary structure, homohexamer. It depends on Mg(2+) as a cofactor. In terms of processing, the N-terminus is blocked.

It is found in the cytoplasm. Its subcellular location is the cell membrane. The protein localises to the nucleus. It carries out the reaction a 2'-deoxyribonucleoside 5'-diphosphate + ATP = a 2'-deoxyribonucleoside 5'-triphosphate + ADP. It catalyses the reaction a ribonucleoside 5'-diphosphate + ATP = a ribonucleoside 5'-triphosphate + ADP. Autophosphorylation at His-118 increases serine/threonine protein kinase activity of the enzyme. Interaction with the SET complex inhibits exonuclease activity. In terms of biological role, major role in the synthesis of nucleoside triphosphates other than ATP. Possesses nucleoside-diphosphate kinase, serine/threonine-specific protein kinase, geranyl and farnesyl pyrophosphate kinase, histidine protein kinase and 3'-5' exonuclease activities. Involved in cell proliferation, differentiation and development, signal transduction, G protein-coupled receptor endocytosis, and gene expression. Required for neural development including neural patterning and cell fate determination. This chain is Nucleoside diphosphate kinase A 2 (NME1-2), found in Bos taurus (Bovine).